The chain runs to 121 residues: Cell division protein FtsB (121 aa).

At 1 to 6 (MRNWRW) the chain is on the cytoplasmic side. Residues 7-24 (LLLVLAVLLAWLQYRFWF) form a helical membrane-spanning segment. Residues 25–121 (GPGNSGEVMM…PASTDPVDHP (97 aa)) lie on the Periplasmic side of the membrane. Positions 31–66 (EVMMLEAQVAHQTQDNEGLRQRNQALAAEVKDLKDG) form a coiled coil. Positions 94–121 (APLPAPASPETAAPAQQAPASTDPVDHP) are disordered. Low complexity predominate over residues 101–121 (SPETAAPAQQAPASTDPVDHP).

It belongs to the FtsB family. Part of a complex composed of FtsB, FtsL and FtsQ.

It is found in the cell inner membrane. Essential cell division protein. May link together the upstream cell division proteins, which are predominantly cytoplasmic, with the downstream cell division proteins, which are predominantly periplasmic. This Xanthomonas oryzae pv. oryzae (strain MAFF 311018) protein is Cell division protein FtsB.